The primary structure comprises 822 residues: Stemar-13-ene synthase (822 aa).

Residues 1-10 (MMLLSSSYSG) are compositionally biased toward polar residues. The disordered stretch occupies residues 1–29 (MMLLSSSYSGGQFPGVSPLGTRPKRSTTV). Asp-553, Asp-557, Asn-698, Thr-702, and Glu-706 together coordinate Mg(2+). Residues 553 to 557 (DDLFD) carry the DDXXD motif motif.

This sequence belongs to the terpene synthase family. Mg(2+) is required as a cofactor.

It catalyses the reaction 9alpha-copalyl diphosphate = stemar-13-ene + diphosphate. Functionally, catalyzes the conversion of syn-copalyl diphosphate to the phytoalexin precursor stemarene. The protein is Stemar-13-ene synthase (KSL8) of Oryza sativa subsp. japonica (Rice).